The primary structure comprises 309 residues: D-alanine--D-alanine ligase (309 aa).

The region spanning lysine 110–glutamate 305 is the ATP-grasp domain. An ATP-binding site is contributed by arginine 136–threonine 191. Aspartate 259, glutamate 272, and asparagine 274 together coordinate Mg(2+).

This sequence belongs to the D-alanine--D-alanine ligase family. The cofactor is Mg(2+). It depends on Mn(2+) as a cofactor.

It localises to the cytoplasm. The enzyme catalyses 2 D-alanine + ATP = D-alanyl-D-alanine + ADP + phosphate + H(+). Its pathway is cell wall biogenesis; peptidoglycan biosynthesis. In terms of biological role, cell wall formation. The polypeptide is D-alanine--D-alanine ligase (Methylococcus capsulatus (strain ATCC 33009 / NCIMB 11132 / Bath)).